A 65-amino-acid chain; its full sequence is MRCLPVFIILLLLIPSAASAAQPETKDDAALASFYDNAKRTLQRHWAKSLCCPEDAWCCSHDEGK.

Residues 1–20 form the signal peptide; that stretch reads MRCLPVFIILLLLIPSAASA. A propeptide spanning residues 21–48 is cleaved from the precursor; sequence AQPETKDDAALASFYDNAKRTLQRHWAK. Glu-63 carries the glutamic acid 1-amide modification.

Belongs to the conotoxin T superfamily. In terms of processing, contains 2 disulfide bonds that can be either 'C1-C3, C2-C4' or 'C1-C4, C2-C3', since these disulfide connectivities have been observed for conotoxins with cysteine framework V (for examples, see AC P0DQQ7 and AC P81755). Expressed by the venom duct.

It localises to the secreted. The sequence is that of Conotoxin TsMRCL-04 from Conus tessulatus (Tessellate cone).